Here is a 308-residue protein sequence, read N- to C-terminus: MANTVILVDQPTLEKMKQTYLPFSNPKLPPGAVFAAKKPGVSITGYKSRKVMFQGVNGEAEAKKWVATLPESKAKAPSVSKGILPANFASKNVIGSDEVGTGDFFGPITVCAAYVDAEMMPLLKELGVKDSKAMKDPEICRIAEKIMPLVPHSVLLCPNPKYNELQKRGMNQGQMKALLHNRAIENVLKKLAPIKPEAILIDQFAEKNTYYRYLAKEPSIIREDVFFATKAEGLHLSVAAASIIARYKFVQAFDAMSKEVGIPLPKGAGPHVDAVAAEIIERFGLETLAKYTKQHFANTEKALKMVKK.

Residues Lys91–Lys308 form the RNase H type-2 domain. A divalent metal cation contacts are provided by Asp97, Glu98, and Asp202.

It belongs to the RNase HII family. RnhC subfamily. Mn(2+) serves as cofactor. Requires Mg(2+) as cofactor.

The protein localises to the cytoplasm. It catalyses the reaction Endonucleolytic cleavage to 5'-phosphomonoester.. Endonuclease that specifically degrades the RNA of RNA-DNA hybrids. The polypeptide is Ribonuclease HIII (Listeria monocytogenes serovar 1/2a (strain ATCC BAA-679 / EGD-e)).